The primary structure comprises 37 residues: Large ribosomal subunit protein bL36 (37 aa).

The protein belongs to the bacterial ribosomal protein bL36 family.

In Syntrophotalea carbinolica (strain DSM 2380 / NBRC 103641 / GraBd1) (Pelobacter carbinolicus), this protein is Large ribosomal subunit protein bL36.